Consider the following 638-residue polypeptide: ATP-dependent rRNA helicase spb4 (638 aa).

Residues 14 to 42 (WDGVSPSLSEWVLEAVSSMGFTRMTPVQA) carry the Q motif motif. A Helicase ATP-binding domain is found at 45-249 (IPLFMAHKDV…RVGLRNPVKV (205 aa)). 58–65 (AVTGSGKT) lines the ATP pocket. Positions 197–200 (DEAD) match the DEAD box motif. The Helicase C-terminal domain occupies 283–437 (ALKHILHSVD…PISFSESEAT (155 aa)). 2 stretches are compositionally biased toward basic and acidic residues: residues 534–554 (LLQE…RKAT) and 577–615 (QRRQ…EERR). The segment at 534–638 (LLQESKEGDG…KDEEEFEGFD (105 aa)) is disordered. Positions 566-619 (RNKKQKRREQKQRRQEKNKWEKMTEEERQKIRETEQMVESIRVKNEEERRLRRA) form a coiled coil.

The protein belongs to the DEAD box helicase family. DDX55/SPB4 subfamily. Component of pre-60S ribosomal complexes.

The protein localises to the nucleus. The protein resides in the nucleolus. The enzyme catalyses ATP + H2O = ADP + phosphate + H(+). In terms of biological role, ATP-binding RNA helicase involved in the biogenesis of 60S ribosomal subunits. Binds 90S pre-ribosomal particles and dissociates from pre-60S ribosomal particles after processing of 27SB pre-rRNA. Required for the normal formation of 18S rRNA through the processing of pre-rRNAs at sites A0, A1 and A2, and the normal formation of 25S and 5.8S rRNAs through the processing of pre-rRNAs at sites C1 and C2. The chain is ATP-dependent rRNA helicase spb4 from Aspergillus oryzae (strain ATCC 42149 / RIB 40) (Yellow koji mold).